A 427-amino-acid chain; its full sequence is Serine hydroxymethyltransferase (427 aa).

(6S)-5,6,7,8-tetrahydrofolate contacts are provided by residues L122 and 126 to 128 (GHL). K231 is subject to N6-(pyridoxal phosphate)lysine. (6S)-5,6,7,8-tetrahydrofolate-binding positions include E247 and 355 to 357 (SPF).

This sequence belongs to the SHMT family. As to quaternary structure, homodimer. It depends on pyridoxal 5'-phosphate as a cofactor.

The protein localises to the cytoplasm. It carries out the reaction (6R)-5,10-methylene-5,6,7,8-tetrahydrofolate + glycine + H2O = (6S)-5,6,7,8-tetrahydrofolate + L-serine. It functions in the pathway one-carbon metabolism; tetrahydrofolate interconversion. It participates in amino-acid biosynthesis; glycine biosynthesis; glycine from L-serine: step 1/1. Functionally, catalyzes the reversible interconversion of serine and glycine with tetrahydrofolate (THF) serving as the one-carbon carrier. This reaction serves as the major source of one-carbon groups required for the biosynthesis of purines, thymidylate, methionine, and other important biomolecules. Also exhibits THF-independent aldolase activity toward beta-hydroxyamino acids, producing glycine and aldehydes, via a retro-aldol mechanism. The sequence is that of Serine hydroxymethyltransferase from Crocosphaera subtropica (strain ATCC 51142 / BH68) (Cyanothece sp. (strain ATCC 51142)).